A 104-amino-acid polypeptide reads, in one-letter code: Zinc-containing ferredoxin-2 (104 aa).

The interval 2-37 (GIDPNYRQNRQVVGEHEGHKIYGPVEPPGKLGIHGT) is N-terminal extension. Zn(2+) contacts are provided by histidine 17, histidine 20, and histidine 35. 4Fe-4S ferredoxin-type domains follow at residues 38-66 (IVGV…WFDT) and 75-104 (KADP…VKPP). Positions 46 and 52 each coordinate [3Fe-4S] cluster. Cysteine 56 provides a ligand contact to [4Fe-4S] cluster. Zn(2+) is bound at residue aspartate 77. Residues cysteine 84, cysteine 87, and cysteine 90 each contribute to the [4Fe-4S] cluster site. Cysteine 94 serves as a coordination point for [3Fe-4S] cluster.

Requires [3Fe-4S] cluster as cofactor. It depends on [4Fe-4S] cluster as a cofactor. Zn(2+) serves as cofactor.

Its function is as follows. Ferredoxins are iron-sulfur proteins that transfer electrons in a wide variety of metabolic reactions. The polypeptide is Zinc-containing ferredoxin-2 (zfx2) (Sulfurisphaera tokodaii (strain DSM 16993 / JCM 10545 / NBRC 100140 / 7) (Sulfolobus tokodaii)).